The following is a 507-amino-acid chain: Chromosomal replication initiator protein DnaA (507 aa).

The segment at 1–112 is domain I, interacts with DnaA modulators; the sequence is MTDDPGSGFT…PATDEADDTT (112 aa). Residues 99–155 are disordered; it reads RIAPPATDEADDTTVPPSENPATTSPDTTTDNDEIDDSAAARGDNQHSWPSYFTERP. Positions 113 to 127 are enriched in polar residues; sequence VPPSENPATTSPDTT. The domain II stretch occupies residues 113–166; it reads VPPSENPATTSPDTTTDNDEIDDSAAARGDNQHSWPSYFTERPHNTDSATAGVT. The tract at residues 167-383 is domain III, AAA+ region; that stretch reads SLNRRYTFDT…GALIRVTAFA (217 aa). Residues glycine 211, glycine 213, lysine 214, and threonine 215 each coordinate ATP. The tract at residues 384–507 is domain IV, binds dsDNA; the sequence is SLNKTPIDKA…TTRIRQRSKR (124 aa).

The protein belongs to the DnaA family. In terms of assembly, oligomerizes as a right-handed, spiral filament on DNA at oriC.

It localises to the cytoplasm. Plays an essential role in the initiation and regulation of chromosomal replication. ATP-DnaA binds to the origin of replication (oriC) to initiate formation of the DNA replication initiation complex once per cell cycle. Binds the DnaA box (a 9 base pair repeat at the origin) and separates the double-stranded (ds)DNA. Forms a right-handed helical filament on oriC DNA; dsDNA binds to the exterior of the filament while single-stranded (ss)DNA is stabiized in the filament's interior. The ATP-DnaA-oriC complex binds and stabilizes one strand of the AT-rich DNA unwinding element (DUE), permitting loading of DNA polymerase. After initiation quickly degrades to an ADP-DnaA complex that is not apt for DNA replication. Binds acidic phospholipids. The chain is Chromosomal replication initiator protein DnaA from Mycobacterium tuberculosis (strain ATCC 25177 / H37Ra).